Here is a 401-residue protein sequence, read N- to C-terminus: Probable trafficking protein particle complex subunit 13 homolog (401 aa).

It belongs to the TRAPPC13 family.

In Caenorhabditis briggsae, this protein is Probable trafficking protein particle complex subunit 13 homolog.